Consider the following 155-residue polypeptide: Putative pre-16S rRNA nuclease (155 aa).

The segment at 136-155 (DAERATSRPPGHPVEPRIGP) is disordered.

This sequence belongs to the YqgF nuclease family.

The protein resides in the cytoplasm. Its function is as follows. Could be a nuclease involved in processing of the 5'-end of pre-16S rRNA. This chain is Putative pre-16S rRNA nuclease, found in Leifsonia xyli subsp. xyli (strain CTCB07).